The chain runs to 186 residues: MASYQNRPGGQATDEYGNPIQQQYDEYGNPMGGGGYGTGGGGGATGGQGYGTGGQGYGSGGQGYGTGGQGYGTGTGTEGFGTGGGARHHGQEQLHKESGGGLGGMLHRSGSGSSSSSEDDGQGGRRKKGITQKIKEKLPGHHDQSGQAQAMGGMGSGYDAGGYGGEHHEKKGMMDKIKEKLPGGGR.

The tract at residues 1–186 (MASYQNRPGG…IKEKLPGGGR (186 aa)) is disordered. The span at 30–85 (PMGGGGYGTGGGGGATGGQGYGTGGQGYGSGGQGYGTGGQGYGTGTGTEGFGTGGG) shows a compositional bias: gly residues. Over residues 89 to 98 (HGQEQLHKES) the composition is skewed to basic and acidic residues. The span at 105–116 (MLHRSGSGSSSS) shows a compositional bias: low complexity. Residues 133–144 (KIKEKLPGHHDQ) are compositionally biased toward basic and acidic residues. Gly residues predominate over residues 152–164 (GGMGSGYDAGGYG). Residues 165–186 (GEHHEKKGMMDKIKEKLPGGGR) show a composition bias toward basic and acidic residues.

Belongs to the plant dehydrin family.

This Arabidopsis thaliana (Mouse-ear cress) protein is Dehydrin Rab18 (RAB18).